Here is a 343-residue protein sequence, read N- to C-terminus: Tribbles homolog 2 (343 aa).

Positions glutamate 25–glutamate 50 are disordered. Residues serine 29–serine 45 are compositionally biased toward polar residues. The 248-residue stretch at isoleucine 61 to phenylalanine 308 folds into the Protein kinase domain.

This sequence belongs to the protein kinase superfamily. CAMK Ser/Thr protein kinase family. Tribbles subfamily.

The protein resides in the cytoplasm. It localises to the cytoskeleton. Functionally, interacts with MAPK kinases and regulates activation of MAP kinases. Does not display kinase activity. This chain is Tribbles homolog 2, found in Mus musculus (Mouse).